The sequence spans 320 residues: Lipoyl synthase (320 aa).

Residues Cys56, Cys61, Cys67, Cys82, Cys86, Cys89, and Ser295 each coordinate [4Fe-4S] cluster. The Radical SAM core domain maps to 68–284; the sequence is WNRRTATFMI…REEALKRGFA (217 aa). The tract at residues 300 to 320 is disordered; the sequence is EQSAQAVARRTGAGRAAQTGD. Low complexity predominate over residues 303 to 320; sequence AQAVARRTGAGRAAQTGD.

The protein belongs to the radical SAM superfamily. Lipoyl synthase family. [4Fe-4S] cluster serves as cofactor.

The protein localises to the cytoplasm. The enzyme catalyses [[Fe-S] cluster scaffold protein carrying a second [4Fe-4S](2+) cluster] + N(6)-octanoyl-L-lysyl-[protein] + 2 oxidized [2Fe-2S]-[ferredoxin] + 2 S-adenosyl-L-methionine + 4 H(+) = [[Fe-S] cluster scaffold protein] + N(6)-[(R)-dihydrolipoyl]-L-lysyl-[protein] + 4 Fe(3+) + 2 hydrogen sulfide + 2 5'-deoxyadenosine + 2 L-methionine + 2 reduced [2Fe-2S]-[ferredoxin]. It functions in the pathway protein modification; protein lipoylation via endogenous pathway; protein N(6)-(lipoyl)lysine from octanoyl-[acyl-carrier-protein]: step 2/2. In terms of biological role, catalyzes the radical-mediated insertion of two sulfur atoms into the C-6 and C-8 positions of the octanoyl moiety bound to the lipoyl domains of lipoate-dependent enzymes, thereby converting the octanoylated domains into lipoylated derivatives. The chain is Lipoyl synthase from Symbiobacterium thermophilum (strain DSM 24528 / JCM 14929 / IAM 14863 / T).